The primary structure comprises 465 residues: GTPase Der (465 aa).

2 consecutive EngA-type G domains span residues 27 to 190 and 202 to 375; these read PVLA…PEAP and RRIA…AGWE. Residues 33 to 40, 80 to 84, 142 to 145, 208 to 215, 255 to 259, and 320 to 323 each bind GTP; these read GRPNVGKS, DTGGW, NKVD, DTAGI, and NKWD. The 83-residue stretch at 376-458 folds into the KH-like domain; it reads TRVPTGRLNA…PIHISVRVRE (83 aa).

It belongs to the TRAFAC class TrmE-Era-EngA-EngB-Septin-like GTPase superfamily. EngA (Der) GTPase family. In terms of assembly, associates with the 50S ribosomal subunit.

In terms of biological role, GTPase that plays an essential role in the late steps of ribosome biogenesis. This Streptomyces coelicolor (strain ATCC BAA-471 / A3(2) / M145) protein is GTPase Der.